Consider the following 493-residue polypeptide: Cyclin-dependent kinase-like 2 (493 aa).

Positions 4–287 (YENLGLVGEG…CAELLHHDFF (284 aa)) constitute a Protein kinase domain. ATP contacts are provided by residues 10-18 (VGEGSYGMV) and lysine 33. The short motif at 45 to 51 (KKIAMRE) is the [NKR]KIAxRE element. The active-site Proton acceptor is aspartate 126. Disordered regions lie at residues 311–338 (VSLS…KTLV) and 363–384 (GEKA…SRTS). The segment covering 320 to 336 (RKKEKEKDDSLGEERKT) has biased composition (basic and acidic residues).

Belongs to the protein kinase superfamily. CMGC Ser/Thr protein kinase family. CDC2/CDKX subfamily.

It is found in the cytoplasm. The protein localises to the nucleus. It catalyses the reaction L-seryl-[protein] + ATP = O-phospho-L-seryl-[protein] + ADP + H(+). The enzyme catalyses L-threonyl-[protein] + ATP = O-phospho-L-threonyl-[protein] + ADP + H(+). In Pongo abelii (Sumatran orangutan), this protein is Cyclin-dependent kinase-like 2.